We begin with the raw amino-acid sequence, 133 residues long: MAKEYSRTQRIGDQMQRELAQLIRREVKDPRVGLVTITAVEVSRDVGHAKIFITVMGQDNAEDIAQSIKVLNAAAGFLRMQLAREMKLRSVPQLHFHYDESVVRGAHLSALIERAVAEDNQHVAAAEPEDTKE.

This sequence belongs to the RbfA family. In terms of assembly, monomer. Binds 30S ribosomal subunits, but not 50S ribosomal subunits or 70S ribosomes.

The protein localises to the cytoplasm. Functionally, one of several proteins that assist in the late maturation steps of the functional core of the 30S ribosomal subunit. Associates with free 30S ribosomal subunits (but not with 30S subunits that are part of 70S ribosomes or polysomes). Required for efficient processing of 16S rRNA. May interact with the 5'-terminal helix region of 16S rRNA. The protein is Ribosome-binding factor A of Pseudomonas fluorescens (strain Pf0-1).